The sequence spans 325 residues: Methionyl-tRNA formyltransferase (325 aa).

Position 112-115 (112-115) interacts with (6S)-5,6,7,8-tetrahydrofolate; it reads SLLP.

It belongs to the Fmt family.

The catalysed reaction is L-methionyl-tRNA(fMet) + (6R)-10-formyltetrahydrofolate = N-formyl-L-methionyl-tRNA(fMet) + (6S)-5,6,7,8-tetrahydrofolate + H(+). Functionally, attaches a formyl group to the free amino group of methionyl-tRNA(fMet). The formyl group appears to play a dual role in the initiator identity of N-formylmethionyl-tRNA by promoting its recognition by IF2 and preventing the misappropriation of this tRNA by the elongation apparatus. The chain is Methionyl-tRNA formyltransferase from Roseiflexus sp. (strain RS-1).